The following is a 200-amino-acid chain: MARFRGSNWKKSRRLGISLSGTGKELEKRPYAPGQHGPNQRKKLSEYALQLREKQKLRYLYGMTERQFRNTFEIAGNQHGVHGENFMQLLAARLDAVVYSLGLARTRRQARQIVNHGHIEVDGKRVDIPSYTLKPGQEISVREKSLKLDIIAESVEINNFVPDYLEFDADNLKGKYIRVPERSELPAEINEQLIVEYYSR.

The disordered stretch occupies residues 20-41 (SGTGKELEKRPYAPGQHGPNQR). Residues 92-155 (ARLDAVVYSL…LKLDIIAESV (64 aa)) enclose the S4 RNA-binding domain.

It belongs to the universal ribosomal protein uS4 family. Part of the 30S ribosomal subunit. Contacts protein S5. The interaction surface between S4 and S5 is involved in control of translational fidelity.

Its function is as follows. One of the primary rRNA binding proteins, it binds directly to 16S rRNA where it nucleates assembly of the body of the 30S subunit. With S5 and S12 plays an important role in translational accuracy. The polypeptide is Small ribosomal subunit protein uS4 (Staphylococcus saprophyticus subsp. saprophyticus (strain ATCC 15305 / DSM 20229 / NCIMB 8711 / NCTC 7292 / S-41)).